We begin with the raw amino-acid sequence, 107 residues long: Putative protein RFPL3S (107 aa).

Strongly expressed in the testis and weakly in brain, placenta and pancreas.

This is Putative protein RFPL3S (RFPL3S) from Homo sapiens (Human).